The following is a 130-amino-acid chain: Small ribosomal subunit protein uS8 (130 aa).

This sequence belongs to the universal ribosomal protein uS8 family. Part of the 30S ribosomal subunit. Contacts proteins S5 and S12.

One of the primary rRNA binding proteins, it binds directly to 16S rRNA central domain where it helps coordinate assembly of the platform of the 30S subunit. This chain is Small ribosomal subunit protein uS8, found in Pseudomonas fluorescens (strain SBW25).